The sequence spans 839 residues: Sodium/hydrogen exchanger 3 (839 aa).

The signal sequence occupies residues 1–32; that stretch reads MPLGVRGTRREFRFPVWGLLLLALWMLPRALG. Topologically, residues 33–56 are extracellular; the sequence is VEEIPGPDSHEKQGFQIVTFKWHH. The chain crosses the membrane as a helical span at residues 57 to 79; that stretch reads VQDPYIIALWILVASLAKIVFHL. The Cytoplasmic segment spans residues 80 to 87; the sequence is SHKVTSVV. The helical transmembrane segment at 88 to 107 threads the bilayer; that stretch reads PESALLIVLGLILGGIVWAA. Over 108–116 the chain is Extracellular; that stretch reads DHIASFTLT. Residues 117–134 form a helical membrane-spanning segment; the sequence is PTVFFFYLLPPIVLDAGY. At 135 to 137 the chain is on the cytoplasmic side; it reads FMP. A helical transmembrane segment spans residues 138-173; the sequence is NRLFFGNLGTILLYAVIGTVWNAATTGLSLYGVYLS. Residues G143, G146, and T147 each contribute to the a 1,2-diacyl-sn-glycero-3-phospho-(1D-myo-inositol) site. The Extracellular portion of the chain corresponds to 174–186; sequence GIMGDLSIGLLDF. A helical membrane pass occupies residues 187–208; it reads LLFGSLIAAVDPVAVLAVFEEV. Residues 209 to 210 lie on the Cytoplasmic side of the membrane; sequence HV. A helical transmembrane segment spans residues 211-242; that stretch reads NDVLFIIVFGESLLNDAVTVVLYNVFDSFVSL. Residues 243–249 are Extracellular-facing; it reads GADKVTG. The chain crosses the membrane as a helical span at residues 250-284; sequence VDCVKGIVSFFVVSLGGTLIGIIFAFLLSLVTRFT. The Cytoplasmic portion of the chain corresponds to 285 to 286; it reads KH. A helical transmembrane segment spans residues 287-309; it reads VRIIEPGFVFIISYLSYLTSEML. The Extracellular portion of the chain corresponds to 310 to 311; it reads SL. A helical membrane pass occupies residues 312–328; it reads SAILAITFCGICCQKYV. The Cytoplasmic portion of the chain corresponds to 329 to 335; it reads KANISEQ. Residues 336–364 form a helical membrane-spanning segment; the sequence is SATTVRYTMKMLASGAETIIFMFLGISAV. The Extracellular portion of the chain corresponds to 365–372; the sequence is DPAIWTWN. Residues 373–394 traverse the membrane as a helical segment; sequence TAFILLTLVFISVYRAIGVVLQ. Over 395 to 407 the chain is Cytoplasmic; the sequence is TWLLNKYRMVQLE. M403 is an a 1,2-diacyl-sn-glycero-3-phospho-(1D-myo-inositol) binding site. A helical transmembrane segment spans residues 408–431; the sequence is IIDQVVMSYGGLRGAVAYALVVLL. Residues 432–438 lie on the Extracellular side of the membrane; that stretch reads DEKKVKE. Residues 439-472 form a helical membrane-spanning segment; sequence KNLFVSTTIIVVFFTVIFQGLTIKPLVQWLKVKK. Residues 473–839 lie on the Cytoplasmic side of the membrane; the sequence is SEHREPKLNE…RSFLPESTHM (367 aa). Positions 502, 503, and 505 each coordinate a 1,2-diacyl-sn-glycero-3-phospho-(1D-myo-inositol). S560 and S568 each carry phosphoserine. The interval 581–595 is interaction with EZR; sequence RPSTVEASVSYLLRE. An interaction with NHERF4 region spans residues 596–673; it reads NVSTVCLDMQ…RKRLESFKST (78 aa). An interaction with AHCYL1 region spans residues 597–701; that stretch reads VSTVCLDMQA…GQKRRNSSIP (105 aa). Phosphoserine occurs at positions 598 and 613. S669 is subject to Phosphoserine; by SGK1. Residues 688 to 697 are compositionally biased toward basic residues; the sequence is KRERGQKRRN. A disordered region spans residues 688–710; the sequence is KRERGQKRRNSSIPNGKIPMESP. A phosphoserine mark is found at S724, S815, and S818.

The protein belongs to the monovalent cation:proton antiporter 1 (CPA1) transporter (TC 2.A.36) family. In terms of assembly, homodimer. Found in the forms of complex and dynamic macromolecular complexes. Binds NHERF1 and NHERF2. Interacts with CHP1, CHP2 and SHANK2. Interacts with NHERF4 and interactions decrease in response to elevated calcium ion levels. Interacts with PDZK1 (via C-terminal PDZ domain). Interacts with AHCYL1; the interaction is required for SLC9A3 activity. Interacts with EZR; interaction targets SLC9A3 to the apical membrane. Interacts with SNX27 (via PDZ domains); directs SLC9A3 membrane insertion from early endosomes to the plasma membrane. Post-translationally, phosphorylated by PKA, which inhibits activity. Phosphorylation at Ser-669 by SGK1 is associated with increased abundance at the cell membrane.

The protein resides in the apical cell membrane. Its subcellular location is the cell membrane. It is found in the recycling endosome membrane. It localises to the early endosome membrane. The enzyme catalyses Na(+)(in) + H(+)(out) = Na(+)(out) + H(+)(in). Its activity is regulated as follows. Seems to switch between active and inactive modes in response to various stimuli. Activated directly or indirectly by membrane phosphatidylinositol (PIs). Regulated by a variety of auxiliary proteins, which facilitate the maturation, cell surface expression and function of the transporter. Inhibited specifically by the drug tenapanor. Plasma membrane Na(+)/H(+) antiporter. Exchanges intracellular H(+) ions for extracellular Na(+) in 1:1 stoichiometry, playing a key role in salt and fluid absorption and pH homeostasis. Major apical Na(+)/H(+) exchanger in kidney and intestine playing an important role in renal and intestine Na(+) absorption and blood pressure regulation. The polypeptide is Sodium/hydrogen exchanger 3 (SLC9A3) (Didelphis virginiana (North American opossum)).